The chain runs to 201 residues: MARYTGPITRKSRRLRVDLVGGDQAFERRPYPPGQHGRARIKESEYLLQLQEKQKARFSYGVMEKQFRRYYEEANRQKGKTGDNLLRLLETRLDNVVYRAGLARTRRQARQLVSHGHFLVNGVKVDVPSYRVSQYDIIDVKEKSLSTLPFQVARETLGERPVPGWLQVLPGRLRILVHQEPERAQIDVPLQEQLIVEYYSK.

An S4 RNA-binding domain is found at 91 to 155 (TRLDNVVYRA…STLPFQVARE (65 aa)).

The protein belongs to the universal ribosomal protein uS4 family. Part of the 30S ribosomal subunit. Contacts protein S5. The interaction surface between S4 and S5 is involved in control of translational fidelity.

One of the primary rRNA binding proteins, it binds directly to 16S rRNA where it nucleates assembly of the body of the 30S subunit. Its function is as follows. With S5 and S12 plays an important role in translational accuracy. This Nocardia farcinica (strain IFM 10152) protein is Small ribosomal subunit protein uS4.